A 435-amino-acid chain; its full sequence is Serine--tRNA ligase (435 aa).

239–241 contacts L-serine; it reads TAE. 270–272 is a binding site for ATP; the sequence is RAE. Glu-293 provides a ligand contact to L-serine. 357 to 360 lines the ATP pocket; it reads EISS. Ser-393 contributes to the L-serine binding site.

The protein belongs to the class-II aminoacyl-tRNA synthetase family. Type-1 seryl-tRNA synthetase subfamily. In terms of assembly, homodimer. The tRNA molecule binds across the dimer.

The protein resides in the cytoplasm. It catalyses the reaction tRNA(Ser) + L-serine + ATP = L-seryl-tRNA(Ser) + AMP + diphosphate + H(+). The enzyme catalyses tRNA(Sec) + L-serine + ATP = L-seryl-tRNA(Sec) + AMP + diphosphate + H(+). The protein operates within aminoacyl-tRNA biosynthesis; selenocysteinyl-tRNA(Sec) biosynthesis; L-seryl-tRNA(Sec) from L-serine and tRNA(Sec): step 1/1. Catalyzes the attachment of serine to tRNA(Ser). Is also able to aminoacylate tRNA(Sec) with serine, to form the misacylated tRNA L-seryl-tRNA(Sec), which will be further converted into selenocysteinyl-tRNA(Sec). The sequence is that of Serine--tRNA ligase from Parvibaculum lavamentivorans (strain DS-1 / DSM 13023 / NCIMB 13966).